The chain runs to 574 residues: Urease subunit alpha (574 aa).

In terms of domain architecture, Urease spans 131–574 (GAIDSHIHFI…LPMAQRYLLI (444 aa)). Ni(2+)-binding residues include H136, H138, and K219. K219 bears the N6-carboxylysine mark. H221 lines the substrate pocket. Positions 248 and 274 each coordinate Ni(2+). H322 (proton donor) is an active-site residue. D362 lines the Ni(2+) pocket.

The protein belongs to the metallo-dependent hydrolases superfamily. Urease alpha subunit family. In terms of assembly, heterotrimer of UreA (gamma), UreB (beta) and UreC (alpha) subunits. Three heterotrimers associate to form the active enzyme. Ni cation is required as a cofactor. In terms of processing, carboxylation allows a single lysine to coordinate two nickel ions.

Its subcellular location is the cytoplasm. It carries out the reaction urea + 2 H2O + H(+) = hydrogencarbonate + 2 NH4(+). It participates in nitrogen metabolism; urea degradation; CO(2) and NH(3) from urea (urease route): step 1/1. In Prochlorococcus marinus (strain MIT 9303), this protein is Urease subunit alpha.